The primary structure comprises 227 residues: Enolase-phosphatase E1 (227 aa).

The Mg(2+) site is built by Asp11 and Glu13. Residues 118-119 (SS) and Lys161 each bind substrate. Residue Asp186 coordinates Mg(2+).

Belongs to the HAD-like hydrolase superfamily. MasA/MtnC family. As to quaternary structure, monomer. It depends on Mg(2+) as a cofactor.

It is found in the cytoplasm. The protein localises to the nucleus. It carries out the reaction 5-methylsulfanyl-2,3-dioxopentyl phosphate + H2O = 1,2-dihydroxy-5-(methylsulfanyl)pent-1-en-3-one + phosphate. The protein operates within amino-acid biosynthesis; L-methionine biosynthesis via salvage pathway; L-methionine from S-methyl-5-thio-alpha-D-ribose 1-phosphate: step 3/6. It participates in amino-acid biosynthesis; L-methionine biosynthesis via salvage pathway; L-methionine from S-methyl-5-thio-alpha-D-ribose 1-phosphate: step 4/6. Functionally, bifunctional enzyme that catalyzes the enolization of 2,3-diketo-5-methylthiopentyl-1-phosphate (DK-MTP-1-P) into the intermediate 2-hydroxy-3-keto-5-methylthiopentenyl-1-phosphate (HK-MTPenyl-1-P), which is then dephosphorylated to form the acireductone 1,2-dihydroxy-3-keto-5-methylthiopentene (DHK-MTPene). In Saccharomyces cerevisiae (strain YJM789) (Baker's yeast), this protein is Enolase-phosphatase E1.